The following is a 115-amino-acid chain: Splicing factor 3B subunit 6-like protein (115 aa).

The tract at residues Glu9–Lys22 is interaction with pre-mRNA branch site. The 76-residue stretch at Ser12–Pro87 folds into the RRM domain.

It localises to the nucleus. In terms of biological role, necessary for the splicing of pre-mRNA. This Schizosaccharomyces pombe (strain 972 / ATCC 24843) (Fission yeast) protein is Splicing factor 3B subunit 6-like protein.